Here is a 326-residue protein sequence, read N- to C-terminus: Aldo-keto reductase family 1 member D1 (326 aa).

Residues 22-26 (GLGTY) and Asp-52 each bind NADP(+). Tyr-26 contacts substrate. Substrate-binding residues include Tyr-57, Trp-88, Glu-119, and Tyr-131. The active-site Proton donor is Tyr-57. Residues 168–169 (SN), Gln-192, and 219–224 (YSPLGT) each bind NADP(+). Trp-230 lines the substrate pocket. An NADP(+)-binding site is contributed by 273 to 283 (KSTTPERIKEN).

This sequence belongs to the aldo/keto reductase family. In terms of processing, the N-terminus is blocked.

It is found in the cytoplasm. It carries out the reaction 5beta-cholestan-3-one + NADP(+) = cholest-4-en-3-one + NADPH + H(+). The catalysed reaction is 4,5beta-dihydrocortisone + NADP(+) = cortisone + NADPH + H(+). It catalyses the reaction cortisol + NADPH + H(+) = 5beta-dihydrocortisol + NADP(+). The enzyme catalyses corticosterone + NADPH + H(+) = 5beta-dihydrocorticosterone + NADP(+). It carries out the reaction 7alpha,12alpha-dihydroxycholest-4-en-3-one + NADPH + H(+) = 7alpha,12alpha-dihydroxy-5beta-cholestan-3-one + NADP(+). The catalysed reaction is 7alpha-hydroxycholest-4-en-3-one + NADPH + H(+) = 7alpha-hydroxy-5beta-cholestan-3-one + NADP(+). It catalyses the reaction epitestosterone + NADPH + H(+) = 5beta-dihydroepitestosterone + NADP(+). The enzyme catalyses androst-4-ene-3,17-dione + NADPH + H(+) = 5beta-androstane-3,17-dione + NADP(+). It carries out the reaction progesterone + NADPH + H(+) = 5beta-pregnan-3,20-dione + NADP(+). The catalysed reaction is 21-hydroxyprogesterone + NADPH + H(+) = 5beta-dihydrodeoxycorticosterone + NADP(+). It catalyses the reaction aldosterone + NADPH + H(+) = 5beta-dihydroaldosterone + NADP(+). The enzyme catalyses 17beta-hydroxyandrosta-1,4-dien-3-one + NADPH + H(+) = 17beta-hydroxy-5beta-androst-1-en-3-one + NADP(+). It carries out the reaction 17beta-hydroxyestr-4-en-3-one + NADPH + H(+) = 17beta-hydroxy-5beta-estran-3-one + NADP(+). The catalysed reaction is 5beta-dihydrotestosterone + NADP(+) = testosterone + NADPH + H(+). It catalyses the reaction androst-4-ene-3,11,17-trione + NADPH + H(+) = 17beta-hydroxyandrost-4-ene-3,11-dione + NADP(+). Subject to inhibition by high substrate concentrations. Inhibited by testosterone concentrations above 10 uM. Inhibited by the primary and secondary bile acids chenodeoxycholic acid and ursodeoxycholic acid. In terms of biological role, catalyzes the stereospecific NADPH-dependent reduction of the C4-C5 double bond of bile acid intermediates and steroid hormones carrying a delta(4)-3-one structure to yield an A/B cis-ring junction. This cis-configuration is crucial for bile acid biosynthesis and plays important roles in steroid metabolism. Capable of reducing a broad range of delta-(4)-3-ketosteroids from C18 (such as, 17beta-hydroxyestr-4-en-3-one) to C27 (such as, 7alpha-hydroxycholest-4-en-3-one). The protein is Aldo-keto reductase family 1 member D1 (Akr1d1) of Rattus norvegicus (Rat).